Reading from the N-terminus, the 430-residue chain is Peptidoglycan DD-endopeptidase ShyA (430 aa).

The signal sequence occupies residues 1–35; that stretch reads MISKSIILRFSELSMRKKATLVGLPLLAVAAISSS. 3 residues coordinate Zn(2+): His-297, Asp-301, and His-378.

Belongs to the peptidase M23B family. Zn(2+) is required as a cofactor.

The protein resides in the periplasm. It functions in the pathway cell wall degradation; peptidoglycan degradation. Its activity is regulated as follows. Reduced activity in 0.5 mM EDTA and a complete loss of activity at higher EDTA concentrations. The effect of EDTA can be reversed by addition of 1 mM ZnCl(2). Conformational switching between open (catalytically active) and closed (catalytically inactive) conformation of this protein is suggested mechanism of its regulation. The signal or inducer of the conformational shift to the open form unmasking the active site is currently not understood. Functionally, cell wall peptidoglycan (PG) DD-endopeptidase essential for cell growth and elongation. Hydrolyzes peptide cross-links which covalently connect adjacent PG strands probably to allow insertion of new glycans and thus cell wall expansion. Degrades purified whole PG sacculi in vitro. Releases predominantly short glycan chains from the PG. Cleaves D,D cross-linked muropeptides specifically preferring dimeric tetrapeptide-tetrapeptide (D44) substrates and has only little activity on dimeric tetrapeptide-pentapeptide (D45) substrates. Also converts more than 50% of tetrapeptide-tripeptide (D43) to product as well as more than 50% of D43M, which contains D-Met instead of D-Ala in the fourth position of the acceptor moiety. Cleaves the D,D bond between diaminopimelic acid (DAP) and D-Ala of the PG substrate in vitro. No cleavage of L,D bond connecting two DAP moieties. The protein is Peptidoglycan DD-endopeptidase ShyA of Vibrio cholerae serotype O1 (strain ATCC 39315 / El Tor Inaba N16961).